The following is a 432-amino-acid chain: 3-phosphoshikimate 1-carboxyvinyltransferase (432 aa).

Positions 23, 24, and 28 each coordinate 3-phosphoshikimate. K23 serves as a coordination point for phosphoenolpyruvate. Phosphoenolpyruvate contacts are provided by G95 and R123. 3-phosphoshikimate is bound by residues S167, Q169, D317, and K344. Q169 provides a ligand contact to phosphoenolpyruvate. Catalysis depends on D317, which acts as the Proton acceptor. Residues R348 and R390 each contribute to the phosphoenolpyruvate site.

Belongs to the EPSP synthase family. As to quaternary structure, monomer.

The protein resides in the cytoplasm. The catalysed reaction is 3-phosphoshikimate + phosphoenolpyruvate = 5-O-(1-carboxyvinyl)-3-phosphoshikimate + phosphate. The protein operates within metabolic intermediate biosynthesis; chorismate biosynthesis; chorismate from D-erythrose 4-phosphate and phosphoenolpyruvate: step 6/7. Catalyzes the transfer of the enolpyruvyl moiety of phosphoenolpyruvate (PEP) to the 5-hydroxyl of shikimate-3-phosphate (S3P) to produce enolpyruvyl shikimate-3-phosphate and inorganic phosphate. The sequence is that of 3-phosphoshikimate 1-carboxyvinyltransferase from Staphylococcus aureus (strain bovine RF122 / ET3-1).